A 395-amino-acid polypeptide reads, in one-letter code: Cystathionine beta-lyase (395 aa).

N6-(pyridoxal phosphate)lysine is present on Lys210.

Belongs to the trans-sulfuration enzymes family. Homotetramer. Pyridoxal 5'-phosphate is required as a cofactor.

It localises to the cytoplasm. It catalyses the reaction L,L-cystathionine + H2O = L-homocysteine + pyruvate + NH4(+). The enzyme catalyses an S-substituted L-cysteine + H2O = a thiol + pyruvate + NH4(+). It participates in amino-acid biosynthesis; L-methionine biosynthesis via de novo pathway; L-homocysteine from L-cystathionine: step 1/1. Catalyzes the cleavage of cystathionine to homocysteine, pyruvate and ammonia during methionine biosynthesis. The chain is Cystathionine beta-lyase (metC) from Salmonella typhimurium (strain LT2 / SGSC1412 / ATCC 700720).